We begin with the raw amino-acid sequence, 194 residues long: UPF0232 protein in recF-gyrB intergenic region (194 aa).

Positions 1 to 14 (MTGPFDDDGPEEDA) are enriched in acidic residues. The disordered stretch occupies residues 1 to 81 (MTGPFDDDGP…GPGPDARDPQ (81 aa)). Over residues 30–52 (DLVRRTLEEARGAARSQGKDVGR) the composition is skewed to basic and acidic residues.

Belongs to the UPF0232 family.

The protein is UPF0232 protein in recF-gyrB intergenic region of Mycolicibacterium smegmatis (Mycobacterium smegmatis).